Consider the following 190-residue polypeptide: Imidazoleglycerol-phosphate dehydratase (190 aa).

The protein belongs to the imidazoleglycerol-phosphate dehydratase family.

The protein resides in the cytoplasm. The enzyme catalyses D-erythro-1-(imidazol-4-yl)glycerol 3-phosphate = 3-(imidazol-4-yl)-2-oxopropyl phosphate + H2O. It participates in amino-acid biosynthesis; L-histidine biosynthesis; L-histidine from 5-phospho-alpha-D-ribose 1-diphosphate: step 6/9. The chain is Imidazoleglycerol-phosphate dehydratase from Aliarcobacter butzleri (strain RM4018) (Arcobacter butzleri).